We begin with the raw amino-acid sequence, 377 residues long: Lactosylceramide 1,3-N-acetyl-beta-D-glucosaminyltransferase (377 aa).

The Cytoplasmic portion of the chain corresponds to 1 to 14; sequence MRVFVSSRRVKRWQ. A helical; Signal-anchor for type II membrane protein membrane pass occupies residues 15 to 35; the sequence is FFHLFAICFILSFMVFWGPIN. Residues 36–377 are Lumenal-facing; that stretch reads NYIMSHMKSY…NSYPCRAAFA (342 aa). Residue asparagine 58 is glycosylated (N-linked (GlcNAc...) asparagine).

Belongs to the glycosyltransferase 31 family.

It localises to the golgi apparatus membrane. It catalyses the reaction a beta-D-Gal-(1-&gt;4)-beta-D-Glc-(1&lt;-&gt;1)-Cer(d18:1(4E)) + UDP-N-acetyl-alpha-D-glucosamine = a beta-D-GlcNAc-(1-&gt;3)-beta-D-Gal-(1-&gt;4)-beta-D-Glc-(1&lt;-&gt;1)-Cer(d18:1(4E)) + UDP + H(+). The catalysed reaction is a neolactoside nLc4Cer(d18:1(4E)) + UDP-N-acetyl-alpha-D-glucosamine = a neolactoside IV(3)-beta-GlcNAc-nLc4Cer(d18:1(4E)) + UDP + H(+). It functions in the pathway protein modification; protein glycosylation. Its function is as follows. Beta-1,3-N-acetylglucosaminyltransferase that plays a key role in the synthesis of lacto- or neolacto-series carbohydrate chains on glycolipids, notably by participating in biosynthesis of HNK-1 and Lewis X carbohydrate structures. Has strong activity toward lactosylceramide (LacCer) and neolactotetraosylceramide (nLc(4)Cer; paragloboside), resulting in the synthesis of Lc(3)Cer and neolactopentaosylceramide (nLc(5)Cer), respectively. Probably plays a central role in regulating neolacto-series glycolipid synthesis during embryonic development. This Rattus norvegicus (Rat) protein is Lactosylceramide 1,3-N-acetyl-beta-D-glucosaminyltransferase.